Consider the following 216-residue polypeptide: ATP-dependent Clp protease proteolytic subunit (216 aa).

The active-site Nucleophile is the Ser101. The active site involves His126.

This sequence belongs to the peptidase S14 family. In terms of assembly, component of the chloroplastic Clp protease core complex.

The protein resides in the plastid. It localises to the chloroplast stroma. It catalyses the reaction Hydrolysis of proteins to small peptides in the presence of ATP and magnesium. alpha-casein is the usual test substrate. In the absence of ATP, only oligopeptides shorter than five residues are hydrolyzed (such as succinyl-Leu-Tyr-|-NHMec, and Leu-Tyr-Leu-|-Tyr-Trp, in which cleavage of the -Tyr-|-Leu- and -Tyr-|-Trp bonds also occurs).. In terms of biological role, cleaves peptides in various proteins in a process that requires ATP hydrolysis. Has a chymotrypsin-like activity. Plays a major role in the degradation of misfolded proteins. The chain is ATP-dependent Clp protease proteolytic subunit from Oryza nivara (Indian wild rice).